The following is a 166-amino-acid chain: EEF1A lysine methyltransferase 1 (166 aa).

Belongs to the class I-like SAM-binding methyltransferase superfamily. EFM5 family.

It localises to the cytoplasm. The catalysed reaction is L-lysyl-[protein] + 3 S-adenosyl-L-methionine = N(6),N(6),N(6)-trimethyl-L-lysyl-[protein] + 3 S-adenosyl-L-homocysteine + 3 H(+). In terms of biological role, protein-lysine methyltransferase that selectively catalyzes the trimethylation of EEF1A at 'Lys-79'. The sequence is that of EEF1A lysine methyltransferase 1 from Danio rerio (Zebrafish).